The following is a 309-amino-acid chain: Dihydroorotate dehydrogenase B (NAD(+)), catalytic subunit (309 aa).

FMN contacts are provided by residues Ser-21 and 45–46 (KA). Residues Lys-45 and 69–73 (NAIGL) each bind substrate. Positions 99 and 127 each coordinate FMN. Residue Asn-127 participates in substrate binding. Catalysis depends on Cys-130, which acts as the Nucleophile. FMN-binding residues include Lys-165 and Ile-191. Position 192-193 (192-193 (NT)) interacts with substrate. FMN-binding positions include Gly-217, 243-244 (GG), and 265-266 (GT).

It belongs to the dihydroorotate dehydrogenase family. Type 1 subfamily. In terms of assembly, heterotetramer of 2 PyrK and 2 PyrD type B subunits. It depends on FMN as a cofactor.

The protein resides in the cytoplasm. It catalyses the reaction (S)-dihydroorotate + NAD(+) = orotate + NADH + H(+). It functions in the pathway pyrimidine metabolism; UMP biosynthesis via de novo pathway; orotate from (S)-dihydroorotate (NAD(+) route): step 1/1. Functionally, catalyzes the conversion of dihydroorotate to orotate with NAD(+) as electron acceptor. The chain is Dihydroorotate dehydrogenase B (NAD(+)), catalytic subunit (pyrD) from Bacillus cereus (strain ATCC 14579 / DSM 31 / CCUG 7414 / JCM 2152 / NBRC 15305 / NCIMB 9373 / NCTC 2599 / NRRL B-3711).